A 163-amino-acid polypeptide reads, in one-letter code: NADH-quinone oxidoreductase subunit I (163 aa).

4Fe-4S ferredoxin-type domains are found at residues 53-83 and 94-123; these read LRRY…IEAG and VRYD…EGPN. [4Fe-4S] cluster-binding residues include C63, C66, C69, C73, C103, C106, C109, and C113.

Belongs to the complex I 23 kDa subunit family. NDH-1 is composed of 14 different subunits. Subunits NuoA, H, J, K, L, M, N constitute the membrane sector of the complex. It depends on [4Fe-4S] cluster as a cofactor.

It localises to the cell inner membrane. It carries out the reaction a quinone + NADH + 5 H(+)(in) = a quinol + NAD(+) + 4 H(+)(out). NDH-1 shuttles electrons from NADH, via FMN and iron-sulfur (Fe-S) centers, to quinones in the respiratory chain. The immediate electron acceptor for the enzyme in this species is believed to be ubiquinone. Couples the redox reaction to proton translocation (for every two electrons transferred, four hydrogen ions are translocated across the cytoplasmic membrane), and thus conserves the redox energy in a proton gradient. The sequence is that of NADH-quinone oxidoreductase subunit I from Brucella canis (strain ATCC 23365 / NCTC 10854 / RM-666).